We begin with the raw amino-acid sequence, 248 residues long: PF03932 family protein CutC (248 aa).

Belongs to the CutC family. In terms of assembly, homodimer.

It localises to the cytoplasm. This Salmonella schwarzengrund (strain CVM19633) protein is PF03932 family protein CutC.